We begin with the raw amino-acid sequence, 451 residues long: Tubulin gamma-1 chain (451 aa).

Residue serine 131 is modified to Phosphoserine; by BRSK1. Residue 142-148 (AGGTGSG) participates in GTP binding.

It belongs to the tubulin family. In terms of assembly, component of the gamma-tubulin ring complex (gTuRC) consisting of TUBGCP2, TUBGCP3, TUBGCP4, TUBGCP5 and TUBGCP6 and gamma-tubulin TUBG1 or TUBG2. TUBGCP2, TUBGCP3, TUBGCP4, TUBGCP5 and TUBGCP6 assemble in a 5:5:2:1:1 stoichiometry; each is associated with a gamma-tubulin, thereby arranging 14 gamma-tubulins in a helical manner. Gamma-tubulin at the first position is blocked by TUBGCP3 at the last position, allowing 13 protafilaments to grow into a microtubule. The gTuRC (via TUBGCP3 and TUBGCP6) interacts with ACTB and MZT1; the interactions form a luminal bridge that stabilizes the initial structure during complex assembly. The gTuRC (via TUBGCP2) interacts with MZT2A/MZT2B and CDK5RAP2 (via CM1 motif); the interactions play a role in gTuRC activation. Interacts with alpha-beta tubulin heterodimers; the interaction allows microtubules to nucleate from the gTuRC. Interacts with B9D2. Interacts with CDK5RAP2; the interaction is leading to centrosomal localization of TUBG1 and CDK5RAP2. Interacts with CIMAP3. Interacts with SAS6 and NUP62 at the centrosome. Interacts with EML3 (phosphorylated at 'Thr-881') and HAUS8. Interacts with DNM2; this interaction may participate in centrosome cohesion. Interacts with CCDC66. Phosphorylation at Ser-131 by BRSK1 regulates centrosome duplication, possibly by mediating relocation of gamma-tubulin and its associated proteins from the cytoplasm to the centrosome.

The protein localises to the cytoplasm. It localises to the cytoskeleton. Its subcellular location is the microtubule organizing center. It is found in the centrosome. The protein resides in the spindle. Tubulin is the major constituent of microtubules, protein filaments consisting of alpha- and beta-tubulin heterodimers. Gamma-tubulin is a key component of the gamma-tubulin ring complex (gTuRC) which mediates microtubule nucleation. The gTuRC regulates the minus-end nucleation of alpha-beta tubulin heterodimers that grow into microtubule protafilaments, a critical step in centrosome duplication and spindle formation. The protein is Tubulin gamma-1 chain of Canis lupus familiaris (Dog).